The following is a 254-amino-acid chain: Alcohol dehydrogenase (254 aa).

NAD(+) is bound at residue 10–33; that stretch reads FVAGLGGIGLDTSREIVKSGPKNL. Residue S138 coordinates substrate. Y151 (proton acceptor) is an active-site residue.

Belongs to the short-chain dehydrogenases/reductases (SDR) family. As to quaternary structure, homodimer.

The catalysed reaction is a primary alcohol + NAD(+) = an aldehyde + NADH + H(+). It carries out the reaction a secondary alcohol + NAD(+) = a ketone + NADH + H(+). The protein is Alcohol dehydrogenase (Adh) of Drosophila mimica (Fruit fly).